A 547-amino-acid chain; its full sequence is Glucose-6-phosphate isomerase 1 (547 aa).

Glutamate 353 acts as the Proton donor in catalysis. Active-site residues include histidine 384 and lysine 512.

Belongs to the GPI family.

The protein resides in the cytoplasm. It carries out the reaction alpha-D-glucose 6-phosphate = beta-D-fructose 6-phosphate. It participates in carbohydrate biosynthesis; gluconeogenesis. The protein operates within carbohydrate degradation; glycolysis; D-glyceraldehyde 3-phosphate and glycerone phosphate from D-glucose: step 2/4. Catalyzes the reversible isomerization of glucose-6-phosphate to fructose-6-phosphate. This chain is Glucose-6-phosphate isomerase 1, found in Chromobacterium violaceum (strain ATCC 12472 / DSM 30191 / JCM 1249 / CCUG 213 / NBRC 12614 / NCIMB 9131 / NCTC 9757 / MK).